Reading from the N-terminus, the 185-residue chain is Ribosome-recycling factor (185 aa).

This sequence belongs to the RRF family.

It is found in the cytoplasm. Functionally, responsible for the release of ribosomes from messenger RNA at the termination of protein biosynthesis. May increase the efficiency of translation by recycling ribosomes from one round of translation to another. In Bacillus anthracis (strain A0248), this protein is Ribosome-recycling factor.